We begin with the raw amino-acid sequence, 148 residues long: Large ribosomal subunit protein uL15 (148 aa).

The segment at 1–57 (MRLHDLYPFPEERKTRKRVGRGSGSGLGCTSGKGNKGQNARAGGGVRPGFEGGQMPL) is disordered. Composition is skewed to gly residues over residues 21–35 (RGSG…GKGN) and 42–52 (AGGGVRPGFEG).

Belongs to the universal ribosomal protein uL15 family. Part of the 50S ribosomal subunit.

Its function is as follows. Binds to the 23S rRNA. The sequence is that of Large ribosomal subunit protein uL15 from Nitratidesulfovibrio vulgaris (strain ATCC 29579 / DSM 644 / CCUG 34227 / NCIMB 8303 / VKM B-1760 / Hildenborough) (Desulfovibrio vulgaris).